The sequence spans 100 residues: uncharacterized protein (100 aa).

2 consecutive transmembrane segments (helical) span residues 50–70 and 75–95; these read LLIF…FSLF and DVFL…SPEV.

The protein localises to the membrane. This is an uncharacterized protein from Saccharomyces cerevisiae (strain ATCC 204508 / S288c) (Baker's yeast).